Reading from the N-terminus, the 1379-residue chain is DNA-directed RNA polymerase subunit beta (1379 aa).

Belongs to the RNA polymerase beta chain family. The RNAP catalytic core consists of 2 alpha, 1 beta, 1 beta' and 1 omega subunit. When a sigma factor is associated with the core the holoenzyme is formed, which can initiate transcription.

The catalysed reaction is RNA(n) + a ribonucleoside 5'-triphosphate = RNA(n+1) + diphosphate. Its function is as follows. DNA-dependent RNA polymerase catalyzes the transcription of DNA into RNA using the four ribonucleoside triphosphates as substrates. This is DNA-directed RNA polymerase subunit beta from Chelativorans sp. (strain BNC1).